The sequence spans 379 residues: UDP-4-amino-4-deoxy-L-arabinose--oxoglutarate aminotransferase (379 aa).

Residue lysine 182 is modified to N6-(pyridoxal phosphate)lysine.

This sequence belongs to the DegT/DnrJ/EryC1 family. ArnB subfamily. As to quaternary structure, homodimer. The cofactor is pyridoxal 5'-phosphate.

The enzyme catalyses UDP-4-amino-4-deoxy-beta-L-arabinose + 2-oxoglutarate = UDP-beta-L-threo-pentopyranos-4-ulose + L-glutamate. It functions in the pathway nucleotide-sugar biosynthesis; UDP-4-deoxy-4-formamido-beta-L-arabinose biosynthesis; UDP-4-deoxy-4-formamido-beta-L-arabinose from UDP-alpha-D-glucuronate: step 2/3. It participates in bacterial outer membrane biogenesis; lipopolysaccharide biosynthesis. Functionally, catalyzes the conversion of UDP-4-keto-arabinose (UDP-Ara4O) to UDP-4-amino-4-deoxy-L-arabinose (UDP-L-Ara4N). The modified arabinose is attached to lipid A and is required for resistance to polymyxin and cationic antimicrobial peptides. This chain is UDP-4-amino-4-deoxy-L-arabinose--oxoglutarate aminotransferase, found in Shigella boydii serotype 4 (strain Sb227).